The sequence spans 144 residues: Flagellar assembly factor FliW (144 aa).

Belongs to the FliW family. In terms of assembly, interacts with translational regulator CsrA and flagellin(s).

The protein resides in the cytoplasm. Functionally, acts as an anti-CsrA protein, binds CsrA and prevents it from repressing translation of its target genes, one of which is flagellin. Binds to flagellin and participates in the assembly of the flagellum. The polypeptide is Flagellar assembly factor FliW (Bacillus pumilus (strain SAFR-032)).